We begin with the raw amino-acid sequence, 592 residues long: Arginine--tRNA ligase (592 aa).

Residues 112–122 (VNPNKELHVGH) carry the 'HIGH' region motif.

Belongs to the class-I aminoacyl-tRNA synthetase family. As to quaternary structure, monomer.

Its subcellular location is the cytoplasm. The enzyme catalyses tRNA(Arg) + L-arginine + ATP = L-arginyl-tRNA(Arg) + AMP + diphosphate. In Thermus thermophilus (strain ATCC 27634 / DSM 579 / HB8), this protein is Arginine--tRNA ligase.